The following is a 110-amino-acid chain: Large ribosomal subunit protein uL22 (110 aa).

It belongs to the universal ribosomal protein uL22 family. Part of the 50S ribosomal subunit.

Its function is as follows. This protein binds specifically to 23S rRNA; its binding is stimulated by other ribosomal proteins, e.g. L4, L17, and L20. It is important during the early stages of 50S assembly. It makes multiple contacts with different domains of the 23S rRNA in the assembled 50S subunit and ribosome. Functionally, the globular domain of the protein is located near the polypeptide exit tunnel on the outside of the subunit, while an extended beta-hairpin is found that lines the wall of the exit tunnel in the center of the 70S ribosome. This is Large ribosomal subunit protein uL22 from Exiguobacterium sibiricum (strain DSM 17290 / CCUG 55495 / CIP 109462 / JCM 13490 / 255-15).